Here is a 97-residue protein sequence, read N- to C-terminus: MLLHGLGRMNIIFICFPSLACLLTSRTPLCAPLFSHLDGMTPCPIDCGFAVGRSRGGGFGGKPESNSLHYDTMHKQHAMPFFIINPTEWKRNFCNTG.

An N-terminal signal peptide occupies residues 1–21; it reads MLLHGLGRMNIIFICFPSLAC.

This is an uncharacterized protein from Schizosaccharomyces pombe (strain 972 / ATCC 24843) (Fission yeast).